The chain runs to 130 residues: Small ribosomal subunit protein uS8 (130 aa).

The protein belongs to the universal ribosomal protein uS8 family. In terms of assembly, part of the 30S ribosomal subunit. Contacts proteins S5 and S12.

In terms of biological role, one of the primary rRNA binding proteins, it binds directly to 16S rRNA central domain where it helps coordinate assembly of the platform of the 30S subunit. This chain is Small ribosomal subunit protein uS8, found in Cereibacter sphaeroides (strain KD131 / KCTC 12085) (Rhodobacter sphaeroides).